Reading from the N-terminus, the 112-residue chain is ATP synthase epsilon chain (112 aa).

Belongs to the ATPase epsilon chain family. F-type ATPases have 2 components, CF(1) - the catalytic core - and CF(0) - the membrane proton channel. CF(1) has five subunits: alpha(3), beta(3), gamma(1), delta(1), epsilon(1). CF(0) has three main subunits: a, b and c.

The protein localises to the cell inner membrane. Its function is as follows. Produces ATP from ADP in the presence of a proton gradient across the membrane. The chain is ATP synthase epsilon chain from Rickettsia peacockii (strain Rustic).